The following is a 328-amino-acid chain: Biotin synthase (328 aa).

A Radical SAM core domain is found at 41–260 (TAIETASLLS…VALARILMPA (220 aa)). Cys-56, Cys-60, and Cys-63 together coordinate [4Fe-4S] cluster. Positions 100, 131, 191, and 264 each coordinate [2Fe-2S] cluster.

It belongs to the radical SAM superfamily. Biotin synthase family. As to quaternary structure, homodimer. [4Fe-4S] cluster serves as cofactor. The cofactor is [2Fe-2S] cluster.

It catalyses the reaction (4R,5S)-dethiobiotin + (sulfur carrier)-SH + 2 reduced [2Fe-2S]-[ferredoxin] + 2 S-adenosyl-L-methionine = (sulfur carrier)-H + biotin + 2 5'-deoxyadenosine + 2 L-methionine + 2 oxidized [2Fe-2S]-[ferredoxin]. The protein operates within cofactor biosynthesis; biotin biosynthesis; biotin from 7,8-diaminononanoate: step 2/2. In terms of biological role, catalyzes the conversion of dethiobiotin (DTB) to biotin by the insertion of a sulfur atom into dethiobiotin via a radical-based mechanism. The protein is Biotin synthase of Cereibacter sphaeroides (strain ATCC 17029 / ATH 2.4.9) (Rhodobacter sphaeroides).